The primary structure comprises 85 residues: Cytochrome c2 (85 aa).

Heme c-binding residues include cysteine 12, cysteine 15, histidine 16, and methionine 61.

The protein belongs to the cytochrome c family. Binds 1 heme c group covalently per subunit.

Its function is as follows. Cytochrome c2 is found mainly in purple, non-sulfur, photosynthetic bacteria where it functions as the electron donor to the oxidized bacteriochlorophyll in the photophosphorylation pathway. However, it may also have a role in the respiratory chain and is found in some non-photosynthetic bacteria. This Rubrivivax gelatinosus (Rhodocyclus gelatinosus) protein is Cytochrome c2.